Reading from the N-terminus, the 209-residue chain is Ubiquitin-conjugating enzyme E2 S (209 aa).

The UBC core domain occupies Gln14–Gln160. Cys98 acts as the Glycyl thioester intermediate in catalysis. The tract at residues Gly165 to Leu209 is disordered. Basic and acidic residues predominate over residues Ala184–Leu199. Basic residues predominate over residues Lys200–Leu209.

Belongs to the ubiquitin-conjugating enzyme family.

The enzyme catalyses S-ubiquitinyl-[E1 ubiquitin-activating enzyme]-L-cysteine + [E2 ubiquitin-conjugating enzyme]-L-cysteine = [E1 ubiquitin-activating enzyme]-L-cysteine + S-ubiquitinyl-[E2 ubiquitin-conjugating enzyme]-L-cysteine.. The protein operates within protein modification; protein ubiquitination. Its function is as follows. Catalyzes the covalent attachment of ubiquitin to other proteins. Acts as an essential factor of the anaphase promoting complex/cyclosome (APC/C), a cell cycle-regulated ubiquitin ligase that controls progression through mitosis. Acts by specifically elongating polyubiquitin chains initiated by the E2 enzyme vih/UbcH10 on APC/C substrates, enhancing the degradation of APC/C substrates by the proteasome and promoting mitotic exit. This Drosophila simulans (Fruit fly) protein is Ubiquitin-conjugating enzyme E2 S.